A 554-amino-acid chain; its full sequence is MFS-type transporter tstD (554 aa).

Composition is skewed to polar residues over residues 1–10 (MPEPFNSTMP) and 27–38 (QDSNQPPEMSAS). Positions 1-68 (MPEPFNSTMP…ESENNEPYSV (68 aa)) are disordered. A glycan (N-linked (GlcNAc...) asparagine) is linked at Asn6. The span at 39–48 (SEKKHPENEN) shows a compositional bias: basic and acidic residues. Residues 76 to 96 (LMVLAASLAGFFSPLSASIYY) traverse the membrane as a helical segment. Residues Asn107 and Asn114 are each glycosylated (N-linked (GlcNAc...) asparagine). A run of 5 helical transmembrane segments spans residues 115–135 (LTVT…ASFS), 142–162 (PGYA…ALQN), 173–193 (LQSA…SDII), 202–222 (IAFA…IGGL), and 231–251 (WIFW…FLFF). Residues 281-300 (KEKQRQQRAENEEENANRQR) form a disordered region. The next 3 membrane-spanning stretches (helical) occupy residues 311–331 (VFVV…GVAF), 354–374 (IKVA…ALST), and 413–433 (IALP…WLMT). N-linked (GlcNAc...) asparagine glycosylation occurs at Asn437. The next 3 helical transmembrane spans lie at 442–462 (IILL…LNVL), 473–493 (MVTA…AAMI), and 504–524 (WSYT…LLTM).

The protein belongs to the major facilitator superfamily.

It localises to the membrane. MFS-type transporter; part of the gene cluster that mediates the biosynthesis of the antihypercholesterolemic agents phomoidrides which are dimeric anhydrides. In Talaromyces stipitatus (strain ATCC 10500 / CBS 375.48 / QM 6759 / NRRL 1006) (Penicillium stipitatum), this protein is MFS-type transporter tstD.